The following is a 316-amino-acid chain: Epoxide hydrolase 2 (316 aa).

The AB hydrolase-1 domain occupies 25–302 (PAVLFLHGFP…AAHFINQERP (278 aa)). Asp101 acts as the Nucleophile in catalysis. Tyr150 contributes to the an epoxide binding site. Tyr230 acts as the Proton donor in catalysis. His295 acts as the Proton acceptor in catalysis.

This sequence belongs to the AB hydrolase superfamily. Epoxide hydrolase family. As to quaternary structure, homodimer. Highly expressed in young fruits 15 days after anthesis (15-DAA). Also observed in stems and leaves.

The catalysed reaction is an epoxide + H2O = an ethanediol. It catalyses the reaction (24S)-24,25-epoxycucurbitadienol + H2O = (24R)-24,25-dihydroxycucurbitadienol. The protein operates within secondary metabolite biosynthesis; terpenoid biosynthesis. Functionally, epoxide hydrolase involved in the biosynthesis of cucurbitacin and mogroside tetracyclic triterpene natural products (e.g. siamenoside I and mogrosides IV, V and VI). Cucurbitacins have cytotoxic properties and exhibit deterrent taste as a defense barrier against herbivores. Mogrosides are nonsugar highly oxygenated compounds used as high-intensity zero-calorie sweeteners; they also possess pharmacological properties such as regulating immunity, lowering blood sugar and lipid levels, protecting the liver, and acting as antioxidants and antitumor agents. Catalyzes the hydrolysis of aromatic epoxide-containing substrates, such as the conversion of 24,25-epoxycucurbitadienol to 24,25-dihydroxycucurbitadienol. The polypeptide is Epoxide hydrolase 2 (Siraitia grosvenorii (Monk's fruit)).